Here is a 482-residue protein sequence, read N- to C-terminus: tRNA(Ile)-lysidine synthase (482 aa).

Ser-28–Ser-33 provides a ligand contact to ATP.

It belongs to the tRNA(Ile)-lysidine synthase family.

Its subcellular location is the cytoplasm. The enzyme catalyses cytidine(34) in tRNA(Ile2) + L-lysine + ATP = lysidine(34) in tRNA(Ile2) + AMP + diphosphate + H(+). Its function is as follows. Ligates lysine onto the cytidine present at position 34 of the AUA codon-specific tRNA(Ile) that contains the anticodon CAU, in an ATP-dependent manner. Cytidine is converted to lysidine, thus changing the amino acid specificity of the tRNA from methionine to isoleucine. The protein is tRNA(Ile)-lysidine synthase of Symbiobacterium thermophilum (strain DSM 24528 / JCM 14929 / IAM 14863 / T).